A 465-amino-acid chain; its full sequence is Ribosome biogenesis protein YTM1 (465 aa).

A ubiquitin-like (UBL) domain region spans residues 18–99 (ARLRFSTRDE…ETTLDVEYVR (82 aa)). WD repeat units follow at residues 111–153 (LHDD…IHTS), 160–198 (GHQS…KGIT), 205–242 (GHKG…SPAV), 277–317 (GHTA…LVDT), 319–358 (TTSH…TTVS), 364–404 (GHTN…TDTD), and 427–465 (GDGV…PKTA). Positions 235–272 (KKSESPAVPQNLLPSSSARSSKRRKLNSSASTSQRGPL) are disordered.

It belongs to the WD repeat WDR12/YTM1 family. Component of the NOP7 complex, composed of ERB1, NOP7 and YTM1. The complex is held together by ERB1, which interacts with NOP7 via its N-terminal domain and with YTM1 via a high-affinity interaction between the seven-bladed beta-propeller domains of the 2 proteins. The NOP7 complex associates with the 66S pre-ribosome. Interacts (via UBL domain) with MDN1 (via VWFA/MIDAS domain).

The protein resides in the nucleus. It is found in the nucleolus. The protein localises to the nucleoplasm. Component of the NOP7 complex, which is required for maturation of the 25S and 5.8S ribosomal RNAs and formation of the 60S ribosome. In Coccidioides immitis (strain RS) (Valley fever fungus), this protein is Ribosome biogenesis protein YTM1.